Reading from the N-terminus, the 87-residue chain is Small ribosomal subunit protein bS18 (87 aa).

Residues 1–10 are compositionally biased toward basic and acidic residues; that stretch reads MAGKSSGDRR. Positions 1 to 23 are disordered; the sequence is MAGKSSGDRRKLLRGAKVGKNAA.

It belongs to the bacterial ribosomal protein bS18 family. Part of the 30S ribosomal subunit. Forms a tight heterodimer with protein bS6.

In terms of biological role, binds as a heterodimer with protein bS6 to the central domain of the 16S rRNA, where it helps stabilize the platform of the 30S subunit. This chain is Small ribosomal subunit protein bS18, found in Clavibacter sepedonicus (Clavibacter michiganensis subsp. sepedonicus).